The primary structure comprises 595 residues: NAD-dependent protein deacetylase hst4 (595 aa).

The disordered stretch occupies residues 1-106 (MAPRKTKPAT…HLDLTPRLGF (106 aa)). A compositionally biased stretch (low complexity) spans 9 to 32 (ATKPAAKPTPASTATTSSCPSPKS). The Deacetylase sirtuin-type domain occupies 109–428 (YGDQEPQLNL…SADVERVKNE (320 aa)). Residues 134 to 153 (GAGI…DGLF) and 222 to 225 (QNID) each bind NAD(+). Residue His-253 is the Proton acceptor of the active site. Residues Cys-261, Cys-264, Cys-283, and Cys-286 each coordinate Zn(2+). NAD(+) is bound by residues 342-344 (GTS), 373-375 (NNE), and Cys-394. The span at 445 to 473 (QAQTGMLTPSSSYDGDVENASTTTLSNPA) shows a compositional bias: polar residues. The tract at residues 445–595 (QAQTGMLTPS…IPKGMGKLLD (151 aa)) is disordered. Composition is skewed to basic and acidic residues over residues 478 to 492 (KLTE…DAPK) and 530 to 543 (TPEE…EHKA).

Belongs to the sirtuin family. Class I subfamily. Requires Zn(2+) as cofactor.

Its subcellular location is the nucleus. The enzyme catalyses N(6)-acetyl-L-lysyl-[protein] + NAD(+) + H2O = 2''-O-acetyl-ADP-D-ribose + nicotinamide + L-lysyl-[protein]. NAD-dependent histone deacetylase, which could function in telomeric silencing, cell cycle progression and chromosome stability. The chain is NAD-dependent protein deacetylase hst4 from Emericella nidulans (strain FGSC A4 / ATCC 38163 / CBS 112.46 / NRRL 194 / M139) (Aspergillus nidulans).